Reading from the N-terminus, the 332-residue chain is Probable allantoicase (332 aa).

Belongs to the allantoicase family.

The catalysed reaction is allantoate + H2O = (S)-ureidoglycolate + urea. It functions in the pathway nitrogen metabolism; (S)-allantoin degradation; (S)-ureidoglycolate from allantoate (aminidohydrolase route): step 1/1. This Pseudomonas aeruginosa (strain UCBPP-PA14) protein is Probable allantoicase.